Here is a 286-residue protein sequence, read N- to C-terminus: L-cysteine S-thiosulfotransferase subunit SoxA (286 aa).

The signal sequence occupies residues 1–26 (MTVSKRFLAPVFAMVGGLVLAFSANA). One can recognise a Cytochrome c domain in the interval 80–166 (LAVERGADIW…ALTSYIKHQS (87 aa)). The heme site is built by Cys-100, Cys-103, His-104, Cys-138, Cys-202, Cys-205, and His-206. Arg-243 is a binding site for substrate. Cys-247 contributes to the heme binding site. Cys-247 functions as the Cysteine persulfide intermediate in the catalytic mechanism.

The protein belongs to the SoxA family. Heterodimer of SoxA and SoxX. Heme serves as cofactor. Cysteine persulfide at Cys-247.

It localises to the periplasm. The enzyme catalyses L-cysteinyl-[SoxY protein] + thiosulfate + 2 Fe(III)-[cytochrome c] = S-sulfosulfanyl-L-cysteinyl-[SoxY protein] + 2 Fe(II)-[cytochrome c] + 2 H(+). It catalyses the reaction S-sulfanyl-L-cysteinyl-[SoxY protein] + thiosulfate + 2 Fe(III)-[cytochrome c] = S-(2-sulfodisulfanyl)-L-cysteinyl-[SoxY protein] + 2 Fe(II)-[cytochrome c] + 2 H(+). Its function is as follows. C-type diheme cytochrome, which is part of the SoxAX cytochrome complex involved in sulfur oxidation. The SoxAX complex catalyzes the formation of a heterodisulfide bond between the conserved cysteine residue on a sulfur carrier SoxYZ complex subunit SoxY and thiosulfate or other inorganic sulfur substrates. This leads to the liberation of two electrons, which may be transferred from the SoxAX complex to another cytochrome c that then channels them into the respiratory electron transport chain. Some electrons may be used for reductive CO(2) fixation. The sequence is that of L-cysteine S-thiosulfotransferase subunit SoxA from Pseudaminobacter salicylatoxidans.